Reading from the N-terminus, the 160-residue chain is Adenosine 5'-monophosphoramidase HINT3 (160 aa).

One can recognise an HIT domain in the interval 24-132 (IFCTIAKGDD…LAPYSQLYKW (109 aa)). AMP is bound by residues 50–51 (DI) and 119–121 (HLH). The short motif at 117–121 (HLHLH) is the Histidine triad motif element. H119 functions as the Tele-AMP-histidine intermediate in the catalytic mechanism.

The protein belongs to the HINT family. As to quaternary structure, forms dimers to octamers and even larger oligomer.

The protein resides in the cytoplasm. It localises to the nucleus. The catalysed reaction is adenosine 5'-phosphoramidate + H2O = AMP + NH4(+). Its function is as follows. Exhibits adenosine 5'-monophosphoramidase activity, hydrolyzing purine nucleotide phosphoramidates with a single phosphate group such as adenosine 5'monophosphoramidate (AMP-NH2) to yield AMP and NH2. Hydrolyzes lysyl-AMP (AMP-N-epsilon-(N-alpha-acetyl lysine methyl ester)) generated by lysine tRNA ligase. The protein is Adenosine 5'-monophosphoramidase HINT3 (hint3) of Danio rerio (Zebrafish).